The primary structure comprises 873 residues: MELRRSMALPRLLLLGLWAAALRDGAVAAGMKFTGSPIKLKVSQGQPVKLNCSLEGMEDPEMLWIKDGAVVQSVDQVYIPVDEDHWIGFLSLKSVERTDSGKYWCQVENGGKKEESQQVWLIVEGVPYFTVEPEDVSVSPNAPFHMACAAVGPPEPVTIVWWMGDSRVGLPDISPSILNVSGINQSTMFSCEAHNVKGLSSSRTATVQIKAMPLPPLNVTVSQVTSSNASVVWVPGFDGRAPLHSCTLQVAESPDGQEVSTEVAPVPPFAYGVQGLKHSTNYSVRVQCSNEMGSSPFTERVYFQTLELAPSSTPQNIHVIQRDPGLVLEWEGVAPDVLKENVLGYRLEWIQDNVTQGEMIVQDTKANLTTWNPLKDLIIRVCVLNSAGCGPWSDLFLLEAQEVMGGQRQPPYGTSWVPVALGILTALVTAVALALILLRKRRKETRFGHAFGSVVGRGDPAVHFRAARSFNREGPELIEATLESVGISDELKTKLKDVLIQEQQFTLGRMLGKGEFGSVREALLKLDDGSFQKVAVKMLKADIFTSTDIEEFLREAACMKEFDHPHVTKLIGVSLRSRPKGRLPIPMVILPFMKHGDLHAFLLMSRIGENPFNLPLQTLLKFMIDIASGMEYLSSKNFIHRDLAARNCMLDENMNVSVADFGLSKKIYSGDYYRQGCASKLPVKWLALESLADNLYTTHSDVWAFGVTMWEIVTRGQTPYAGIENAEIYNYLISGNRLKQPPECLEDVYDLMCRCWHPEPKLRPSFGVLRSQLEMIRGRMSTLSLSQDPLYVNIGKDKESSVSDPAVHTSFGNTDGDETIAGAAAAAITSDYRYIMSPLCLGDDVEGERHPEGQEGENKSLLYELETEGEKSC.

The signal sequence occupies residues 1–28 (MELRRSMALPRLLLLGLWAAALRDGAVA). Ig-like C2-type domains lie at 29–116 (AGMK…KEES) and 127–208 (PYFT…ATVQ). Residues 29–416 (AGMKFTGSPI…QRQPPYGTSW (388 aa)) are Extracellular-facing. N-linked (GlcNAc...) asparagine glycosylation occurs at Asn51. 2 disulfide bridges follow: Cys52–Cys105 and Cys148–Cys191. N-linked (GlcNAc...) asparagine glycosylation is found at Asn179, Asn184, Asn218, Asn228, Asn281, Asn353, and Asn367. Fibronectin type-III domains lie at 215–308 (PPLN…TLEL) and 310–403 (PSST…AQEV). Residues 417–437 (VPVALGILTALVTAVALALIL) traverse the membrane as a helical segment. At 438–873 (LRKRRKETRF…ELETEGEKSC (436 aa)) the chain is on the cytoplasmic side. Positions 505–776 (FTLGRMLGKG…GVLRSQLEMI (272 aa)) constitute a Protein kinase domain. Residues 511-519 (LGKGEFGSV) and Lys537 contribute to the ATP site. The Proton acceptor role is filled by Asp642. Position 673 is a phosphotyrosine; by autocatalysis (Tyr673). Residues 845-873 (VEGERHPEGQEGENKSLLYELETEGEKSC) are disordered. Basic and acidic residues predominate over residues 847 to 858 (GERHPEGQEGEN).

It belongs to the protein kinase superfamily. Tyr protein kinase family. AXL/UFO subfamily. Autophosphorylated on tyrosine residues. As to expression, detected in embryonic retina (at protein level). detected in brain, retina, kidney and in retinal Mueller glia-like cells.

The protein localises to the cell membrane. The catalysed reaction is L-tyrosyl-[protein] + ATP = O-phospho-L-tyrosyl-[protein] + ADP + H(+). Its function is as follows. Receptor tyrosine kinase that transduces signals from the extracellular matrix into the cytoplasm by binding to several ligands. Regulates many physiological processes including cell survival, migration and differentiation. Ligand binding at the cell surface induces dimerization and autophosphorylation of TYRO3 on its intracellular domain that provides docking sites for downstream signaling molecules. Following activation by ligand, enhances PI3-kinase activity and activates the AKT survival pathway, including nuclear translocation of NF-kappa-B and up-regulation of transcription of NF-kappa-B-regulated genes. The protein is Tyrosine-protein kinase receptor TYRO3 (TYRO3) of Gallus gallus (Chicken).